The chain runs to 81 residues: Pyruvate synthase subunit PorD (81 aa).

2 consecutive 4Fe-4S ferredoxin-type domains span residues 25 to 50 (FKPV…GCIN) and 51 to 80 (REHE…MERE). Residues cysteine 34, cysteine 37, cysteine 40, cysteine 44, cysteine 60, cysteine 63, cysteine 66, and cysteine 70 each coordinate [4Fe-4S] cluster.

As to quaternary structure, heterotetramer of one alpha, one beta, one delta and one gamma chain. Requires [4Fe-4S] cluster as cofactor.

The sequence is that of Pyruvate synthase subunit PorD (porD) from Methanothermobacter thermautotrophicus (strain ATCC 29096 / DSM 1053 / JCM 10044 / NBRC 100330 / Delta H) (Methanobacterium thermoautotrophicum).